The following is a 361-amino-acid chain: Chorismate synthase (361 aa).

The NADP(+) site is built by R48 and R54. FMN-binding positions include 125-127 (RSS), 238-239 (NA), G278, 293-297 (KPTSS), and R319.

The protein belongs to the chorismate synthase family. As to quaternary structure, homotetramer. The cofactor is FMNH2.

It catalyses the reaction 5-O-(1-carboxyvinyl)-3-phosphoshikimate = chorismate + phosphate. Its pathway is metabolic intermediate biosynthesis; chorismate biosynthesis; chorismate from D-erythrose 4-phosphate and phosphoenolpyruvate: step 7/7. Catalyzes the anti-1,4-elimination of the C-3 phosphate and the C-6 proR hydrogen from 5-enolpyruvylshikimate-3-phosphate (EPSP) to yield chorismate, which is the branch point compound that serves as the starting substrate for the three terminal pathways of aromatic amino acid biosynthesis. This reaction introduces a second double bond into the aromatic ring system. The sequence is that of Chorismate synthase from Salmonella dublin (strain CT_02021853).